A 234-amino-acid polypeptide reads, in one-letter code: Thymidylate kinase (234 aa).

Residue 10–17 (GGEGSGKT) coordinates ATP.

This sequence belongs to the thymidylate kinase family.

It carries out the reaction dTMP + ATP = dTDP + ADP. Functionally, phosphorylation of dTMP to form dTDP in both de novo and salvage pathways of dTTP synthesis. This Cyanothece sp. (strain PCC 7425 / ATCC 29141) protein is Thymidylate kinase.